The primary structure comprises 224 residues: N-terminal Xaa-Pro-Lys N-methyltransferase 1 (224 aa).

Residues Gly-70, Arg-75, 92-94 (DVT), 120-121 (LQ), and Gln-136 contribute to the S-adenosyl-L-methionine site.

Belongs to the methyltransferase superfamily. NTM1 family.

The protein localises to the nucleus. It carries out the reaction N-terminal L-alanyl-L-prolyl-L-lysyl-[protein] + 3 S-adenosyl-L-methionine = N-terminal N,N,N-trimethyl-L-alanyl-L-prolyl-L-lysyl-[protein] + 3 S-adenosyl-L-homocysteine + 3 H(+). The catalysed reaction is N-terminal L-seryl-L-prolyl-L-lysyl-[protein] + 3 S-adenosyl-L-methionine = N-terminal N,N,N-trimethyl-L-seryl-L-prolyl-L-lysyl-[protein] + 3 S-adenosyl-L-homocysteine + 3 H(+). It catalyses the reaction N-terminal L-prolyl-L-prolyl-L-lysyl-[protein] + 2 S-adenosyl-L-methionine = N-terminal N,N-dimethyl-L-prolyl-L-prolyl-L-lysyl-[protein] + 2 S-adenosyl-L-homocysteine + 2 H(+). Its function is as follows. Distributive alpha-N-methyltransferase that methylates the N-terminus of target proteins containing the N-terminal motif [Ala/Gly/Pro/Ser]-Pro-Lys when the initiator Met is cleaved. Specifically catalyzes mono-, di- or tri-methylation of the exposed alpha-amino group of the Ala, Gly or Ser residue in the [Ala/Gly/Ser]-Pro-Lys motif and mono- or di-methylation of Pro in the Pro-Pro-Lys motif. Required during mitosis for normal bipolar spindle formation and chromosome segregation via its action on target proteins. The protein is N-terminal Xaa-Pro-Lys N-methyltransferase 1 (ntmt1) of Xenopus tropicalis (Western clawed frog).